The following is a 56-amino-acid chain: Large ribosomal subunit protein bL32B (56 aa).

Residues methionine 1 to glutamine 19 show a composition bias toward basic residues. A disordered region spans residues methionine 1–alanine 22.

This sequence belongs to the bacterial ribosomal protein bL32 family.

This chain is Large ribosomal subunit protein bL32B (rpmF2), found in Streptomyces coelicolor (strain ATCC BAA-471 / A3(2) / M145).